The chain runs to 309 residues: Malate dehydrogenase (309 aa).

NAD(+)-binding positions include glycine 10–glycine 15 and aspartate 34. Arginine 83 and arginine 89 together coordinate substrate. Residues asparagine 96 and valine 119–asparagine 121 each bind NAD(+). 2 residues coordinate substrate: asparagine 121 and arginine 152. Histidine 176 (proton acceptor) is an active-site residue.

Belongs to the LDH/MDH superfamily. MDH type 3 family.

It catalyses the reaction (S)-malate + NAD(+) = oxaloacetate + NADH + H(+). Its function is as follows. Catalyzes the reversible oxidation of malate to oxaloacetate. The protein is Malate dehydrogenase of Heliobacterium modesticaldum (strain ATCC 51547 / Ice1).